Here is a 92-residue protein sequence, read N- to C-terminus: C-C motif chemokine 3 (92 aa).

A signal peptide spans 1–23 (MKVSTAALAVLLCTMALWNEVFS). 2 disulfides stabilise this stretch: Cys-34–Cys-57 and Cys-35–Cys-73.

It belongs to the intercrine beta (chemokine CC) family. In terms of assembly, self-associates. Also heterodimer of MIP-1-alpha(4-69) and MIP-1-beta(3-69). Interacts with CCR1.

The protein resides in the secreted. Functionally, monokine with inflammatory and chemokinetic properties. Binds to CCR1, CCR4 and CCR5. One of the major HIV-suppressive factors produced by CD8+ T-cells. Recombinant MIP-1-alpha induces a dose-dependent inhibition of different strains of HIV-1, HIV-2, and simian immunodeficiency virus (SIV). The polypeptide is C-C motif chemokine 3 (Ccl3) (Rattus norvegicus (Rat)).